Here is a 546-residue protein sequence, read N- to C-terminus: Mercuric reductase (546 aa).

Positions 2 to 66 (NKFKVNISGM…AIDEANYQAG (65 aa)) constitute an HMA domain. Residues cysteine 13 and cysteine 16 each contribute to the a metal cation site. Positions 96, 116, and 121 each coordinate FAD. A disulfide bridge links cysteine 122 with cysteine 127. FAD-binding residues include lysine 131 and alanine 195. NAD(+)-binding positions include 256-263 (GSGYIGME) and glycine 346. Residues aspartate 387 and valine 395 each coordinate FAD. Hg(2+) contacts are provided by cysteine 543 and cysteine 544.

The protein belongs to the class-I pyridine nucleotide-disulfide oxidoreductase family. In terms of assembly, homodimer. FAD is required as a cofactor.

It carries out the reaction Hg + NADP(+) + H(+) = Hg(2+) + NADPH. Uses NADPH as the preferred electron donor, but shows slight activity with NADH as well. Inhibited by Cu(2+), Cd(2+), Zn(2+) and Co(2+), with Cu(2+) showing the strongest inhibition. Enzyme activity is enhanced by b-mercaptoethanol and NaCl up to concentrations of 500 uM and 100 mM respectively, followed by inhibition at higher concentrations. Functionally, resistance to Hg(2+) in bacteria appears to be governed by a specialized system which includes mercuric reductase. MerA protein is responsible for volatilizing mercury as Hg(0). Catalyzes reduction of Hg(2+) to elemental Hg, which is volatile and can diffuse out of cells passively. Plays a pivotal role in mercury resistance and cell protection. The protein is Mercuric reductase of Lysinibacillus sphaericus (Bacillus sphaericus).